Reading from the N-terminus, the 753-residue chain is A-kinase anchor protein 200 (753 aa).

Disordered regions lie at residues 1–345 (MGKA…QIEA), 462–482 (VETRSSSPPPPLPKSPPPSRV), 531–604 (TEQE…IDPA), 620–641 (VEKETGSISSNVAESSSVSDEQ), and 658–684 (VEETTEQETSDQQVISEEAHSDNDKEN). The N-myristoyl glycine moiety is linked to residue G2. Basic and acidic residues-rich tracts occupy residues 8–38 (RSIDITTDPKKVGEGDEVAGKVEKIDVDQKT) and 59–77 (AVEKKETEEHSENDKDLTT). Over residues 81 to 93 (AAVAEGGDAVAET) the composition is skewed to low complexity. Positions 119–148 (KSKSKKDKVKKKWSFRSISFGKKDKQKPAK) are F-actin binding. The span at 120 to 132 (SKSKKDKVKKKWS) shows a compositional bias: basic residues. 3 positions are modified to phosphoserine: S132, S135, and S137. Over residues 139 to 151 (GKKDKQKPAKSEE) the composition is skewed to basic and acidic residues. Residues 152 to 181 (ATSPTSGTTSPTTAEAEAAPAGDAAVAEPS) are compositionally biased toward low complexity. Residues 216–227 (EQEKQANGETEK) show a composition bias toward basic and acidic residues. The span at 246–262 (EPATVTATESNTTATEE) shows a compositional bias: low complexity. The interaction with PKA-R2 stretch occupies residues 345–725 (ASSEVIETVT…AEQEGESNNK (381 aa)). The span at 468 to 480 (SPPPPLPKSPPPS) shows a compositional bias: pro residues. The span at 532-544 (EQEKQQEEAKVDS) shows a compositional bias: basic and acidic residues. Over residues 545 to 561 (VPETIEESSSTVVVEEV) the composition is skewed to low complexity. Positions 578 to 594 (DVQKPIEDQDTPDEKES) are enriched in basic and acidic residues. Over residues 626 to 638 (SISSNVAESSSVS) the composition is skewed to low complexity. The segment covering 674–684 (EEAHSDNDKEN) has biased composition (basic and acidic residues).

In terms of assembly, homodimer. Interacts with Cam; interaction is calcium-dependent and is inhibited by PKC-mediated phosphorylation of Akap200. Interacts with N/Notch; the interaction stabilizes N/Notch protein levels by preventing Cbl-mediated ubiquitination and subsequent lysosomal degradation of N/Notch. Interacts with Pka-R2. Binds to F-actin; interaction is independent of myristoylation, but is inhibited by Akap200 phosphorylation and Cam binding. Isoform B: Does not bind to Pka-R2. Post-translationally, myristoylated; myristoylation promotes accumulation at the cell periphery. Phosphorylated; phosphorylation prevents binding to F-actin and Cam. In terms of tissue distribution, detected in the brain in both neurons and glia (including perineurial glia); specifically in the neuronal nuclei in the cortex and synaptic neuropil (at protein level). Detected in germline cells, somatic follicle cells and outer rim of the ring canals during oogenesis (at protein level). Isoform A: Detected in the adult (at protein level). Isoform B: Detected in the adult with higher levels in the head (at protein level).

It is found in the cytoplasm. It localises to the cytosol. The protein resides in the cell membrane. Its subcellular location is the cytoskeleton. In terms of biological role, scaffolding protein involved in the regulation of PKA signaling and anchoring to the actin cytoskeleton integrating signals propagated by cAMP, diacylglycerol and calcium. Contributes to the maintenance and regulation of cytoskeletal structures in germline via PKA-mediated signaling. As part of ethanol response in the glia, mediates ethanol-induced structural remodeling of actin cytoskeleton and perineurial membrane topology by anchoring PKA to the membrane of perineurial glia. In specific tissues such as eye and thorax, promotes N/Notch protein stability by inhibiting Cbl-mediated ubiquitination and lysosomal degradation pathway of N/Notch in a PKA-independent way. In the circadian brain neurons evening cells (E-cells), might have a role in circadian pacemaker synchronization by playing a redundant role in signaling downstream of the G protein-couple receptor Pdfr. This is A-kinase anchor protein 200 from Drosophila melanogaster (Fruit fly).